The following is a 994-amino-acid chain: Receptor-like protein 6 (994 aa).

Residues 1–25 form the signal peptide; the sequence is MTGLYSSMSFFLRTIVLLFSTSSFC. Topologically, residues 26–946 are extracellular; sequence NTFASLTQDS…SSSSSSEEDE (921 aa). Residues asparagine 116, asparagine 134, and asparagine 154 are each glycosylated (N-linked (GlcNAc...) asparagine). LRR repeat units follow at residues 122-146, 148-171, 174-199, 205-228, 230-253, 254-278, 280-301, 302-325, 326-349, 350-373, 375-397, 398-421, 423-445, 446-471, 477-497, 498-520, 521-544, 546-569, and 571-595; these read LQHL…EFSK, MRLE…LLQL, LVSL…LFLH, FMNL…EFSY, WSLR…VLLI, PNLE…LRNN, LLKL…ISNL, KHLT…LRSL, SHLS…VSNL, KQLT…LLNL, QLRY…ISQL, SNLE…LFNI, SLTT…NISL, LHNL…VFLS, SLAL…SEFS, SHLE…IRNQ, RNLS…LWRL, ELST…ALSG, and KIVM…GIQY. Asparagine 277 and asparagine 287 each carry an N-linked (GlcNAc...) asparagine glycan. 3 N-linked (GlcNAc...) asparagine glycosylation sites follow: asparagine 420, asparagine 435, and asparagine 442. A glycan (N-linked (GlcNAc...) asparagine) is linked at asparagine 489. 3 N-linked (GlcNAc...) asparagine glycosylation sites follow: asparagine 522, asparagine 554, and asparagine 561. Residues 597 to 613 form an LRR 20; degenerate repeat; the sequence is LGSYNNFTGYIPPSICG. N-linked (GlcNAc...) asparagine glycosylation occurs at asparagine 602. 10 LRR repeats span residues 614 to 637, 639 to 663, 665 to 687, 689 to 710, 711 to 737, 739 to 762, 803 to 827, 828 to 851, 852 to 875, and 877 to 900; these read LANP…CLEA, MSSL…FMNA, VLSS…LAGC, ALEI…WLNS, LPKL…VWFG, PLLR…YFMN, LTKY…VGIL, KELH…LANL, TNLE…LGTL, and SLEW…QFHR. N-linked (GlcNAc...) asparagine glycosylation occurs at asparagine 649. An N-linked (GlcNAc...) asparagine glycan is attached at asparagine 701. Asparagine 762 carries an N-linked (GlcNAc...) asparagine glycan. 2 N-linked (GlcNAc...) asparagine glycosylation sites follow: asparagine 834 and asparagine 850. Residues asparagine 882 and asparagine 902 are each glycosylated (N-linked (GlcNAc...) asparagine). The chain crosses the membrane as a helical span at residues 947–967; it reads LISWIAACLGFAPGMVFGLTM. Over 968–994 the chain is Cytoplasmic; sequence GYIMTSHKHEWFMDTFGRRKGRSTRTR.

This sequence belongs to the RLP family.

The protein resides in the cell membrane. This chain is Receptor-like protein 6, found in Arabidopsis thaliana (Mouse-ear cress).